Consider the following 21-residue polypeptide: Sarafotoxin-D (21 aa).

Intrachain disulfides connect Cys1/Cys15 and Cys3/Cys11.

Belongs to the endothelin/sarafotoxin family. Expressed by the venom gland.

It localises to the secreted. Functionally, vasoconstrictor activity. These toxins cause cardiac arrest probably as a result of coronary vasospasm. May act by displaying agonistic activities towards endothelin-1 and -2 receptors (EDNRA and EDNRB). The sequence is that of Sarafotoxin-D from Atractaspis engaddensis (Israeli burrowing asp).